Reading from the N-terminus, the 165-residue chain is Cytochrome c-type biogenesis protein CcmE (165 aa).

The Cytoplasmic segment spans residues 1–29 (MSATAEDNARGAKPAGNFARTVSQRKRKR). The chain crosses the membrane as a helical; Signal-anchor for type II membrane protein span at residues 30–50 (LFLIGGALAVLAVAVGLMLMA). Residues 51–165 (FSQDIRFFRT…LKEKGVWEGK (115 aa)) lie on the Periplasmic side of the membrane. H143 and Y147 together coordinate heme.

This sequence belongs to the CcmE/CycJ family.

The protein localises to the cell inner membrane. Heme chaperone required for the biogenesis of c-type cytochromes. Transiently binds heme delivered by CcmC and transfers the heme to apo-cytochromes in a process facilitated by CcmF and CcmH. This Brucella anthropi (strain ATCC 49188 / DSM 6882 / CCUG 24695 / JCM 21032 / LMG 3331 / NBRC 15819 / NCTC 12168 / Alc 37) (Ochrobactrum anthropi) protein is Cytochrome c-type biogenesis protein CcmE.